A 399-amino-acid chain; its full sequence is Aromatic-amino-acid aminotransferase (399 aa).

Substrate is bound by residues G36, Y67, W132, and N184. Residue K247 is modified to N6-(pyridoxal phosphate)lysine. R375 is a binding site for substrate.

It belongs to the class-I pyridoxal-phosphate-dependent aminotransferase family. Homodimer. Requires pyridoxal 5'-phosphate as cofactor.

The protein localises to the cytoplasm. The catalysed reaction is an aromatic L-alpha-amino acid + 2-oxoglutarate = an aromatic oxo-acid + L-glutamate. The chain is Aromatic-amino-acid aminotransferase (phhC) from Pseudomonas aeruginosa (strain ATCC 15692 / DSM 22644 / CIP 104116 / JCM 14847 / LMG 12228 / 1C / PRS 101 / PAO1).